The primary structure comprises 456 residues: MALWGGRFQGQASALFQLFNDSLPVDYRLFVQDVEGSIAWADAIASVGILNADECSRLKAALTELLEEVGEDESAIIGSGAEDIHSFVETKLIEKVGDLGKKLHTGRSRNDQVATDLKLWCKASGGLLETKLTAVIQALLALASRELDAVMPGYTHLQRAQPVTFGHWCLAYVEMLERDLSRLADALKRLNTCPLGSGALAGTAYAIDRHELAAALGFGGPTLNSLDSVSDRDHVVELCAAASVSMMHLSRMAEDLIFFNTGEAAFVELADNVTSGSSLMPQKKNPDALELIRGKTGRVYGNLVGILTTMKALPLAYNKDMQEDKEGLFDTLDSWGICLDMAALVLEGVKVNRDNTKQAAQAGYANATELADYLVAKGMPFREAHHVVGEVVLHAISKGQALEALPLASLQSFAAVIGDDVYPHLSLDECLAKRDVLGGTAIKQVTAALAAKQQQY.

The protein belongs to the lyase 1 family. Argininosuccinate lyase subfamily.

It localises to the cytoplasm. It carries out the reaction 2-(N(omega)-L-arginino)succinate = fumarate + L-arginine. It functions in the pathway amino-acid biosynthesis; L-arginine biosynthesis; L-arginine from L-ornithine and carbamoyl phosphate: step 3/3. This chain is Argininosuccinate lyase, found in Shewanella amazonensis (strain ATCC BAA-1098 / SB2B).